A 192-amino-acid chain; its full sequence is Peptidyl-tRNA hydrolase (192 aa).

Tyrosine 17 is a tRNA binding site. Histidine 22 acts as the Proton acceptor in catalysis. Positions 67, 69, and 115 each coordinate tRNA.

The protein belongs to the PTH family. In terms of assembly, monomer.

Its subcellular location is the cytoplasm. It catalyses the reaction an N-acyl-L-alpha-aminoacyl-tRNA + H2O = an N-acyl-L-amino acid + a tRNA + H(+). Functionally, hydrolyzes ribosome-free peptidyl-tRNAs (with 1 or more amino acids incorporated), which drop off the ribosome during protein synthesis, or as a result of ribosome stalling. Catalyzes the release of premature peptidyl moieties from peptidyl-tRNA molecules trapped in stalled 50S ribosomal subunits, and thus maintains levels of free tRNAs and 50S ribosomes. The sequence is that of Peptidyl-tRNA hydrolase from Methylobacillus flagellatus (strain ATCC 51484 / DSM 6875 / VKM B-1610 / KT).